A 1818-amino-acid polypeptide reads, in one-letter code: U3 small nucleolar RNA-associated protein 10 (1818 aa).

A helical transmembrane segment spans residues 568-588 (TDFYLLIPLILLALFDNSKLI). One copy of the HEAT repeat lies at 1778-1816 (LVPYIAELLEDDDEEVEMEVRRGLVRVIENVLGEPLDRY).

Belongs to the HEATR1/UTP10 family. Component of the ribosomal small subunit (SSU) processome.

It localises to the nucleus. It is found in the nucleolus. Its subcellular location is the membrane. Functionally, involved in nucleolar processing of pre-18S ribosomal RNA. Involved in ribosome biosynthesis. This chain is U3 small nucleolar RNA-associated protein 10, found in Candida albicans (strain SC5314 / ATCC MYA-2876) (Yeast).